The sequence spans 1243 residues: Plasma membrane calcium-transporting ATPase 2 (1243 aa).

The span at 1–13 shows a compositional bias: polar residues; the sequence is MGDMTNSDFYSKN. Residues 1 to 24 form a disordered region; the sequence is MGDMTNSDFYSKNQRNESSHGGEF. Residues 1–94 are Cytoplasmic-facing; it reads MGDMTNSDFY…NFIPPKKPKT (94 aa). S18 and S27 each carry phosphoserine. Residues 95–115 form a helical membrane-spanning segment; the sequence is FLQLVWEALQDVTLIILEIAA. The Extracellular portion of the chain corresponds to 116-152; that stretch reads IISLGLSFYHPPGESNEGCATAQGGAEDEGEAEAGWI. A helical membrane pass occupies residues 153 to 173; the sequence is EGAAILLSVICVVLVTAFNDW. Topologically, residues 174–390 are cytoplasmic; the sequence is SKEKQFRGLQ…KEKSVLQGKL (217 aa). A compositionally biased stretch (basic and acidic residues) spans 296–308; that stretch reads EEKKDKKGVKKGD. Residues 296-382 form a disordered region; it reads EEKKDKKGVK…KKKANMHKKE (87 aa). Composition is skewed to low complexity over residues 313-330 and 337-356; these read PAAD…ANAS and QDGS…GAAA. Residues 391–410 form a helical membrane-spanning segment; sequence TKLAVQIGKAGLVMSAITVI. Over 411–443 the chain is Extracellular; sequence ILVLYFTVDTFVVNKKPWLTECTPVYVQYFVKF. Residues 444–461 form a helical membrane-spanning segment; sequence FIIGVTVLVVAVPEGLPL. Residues 462–875 lie on the Cytoplasmic side of the membrane; sequence AVTISLAYSV…MWGRNVYDSI (414 aa). D499 acts as the 4-aspartylphosphate intermediate in catalysis. Residues D820 and D824 each coordinate Mg(2+). Residues 876-895 traverse the membrane as a helical segment; the sequence is SKFLQFQLTVNVVAVIVAFT. The Extracellular segment spans residues 896-905; the sequence is GACITQDSPL. The chain crosses the membrane as a helical span at residues 906-926; sequence KAVQMLWVNLIMDTFASLALA. Residues 927 to 946 are Cytoplasmic-facing; the sequence is TEPPTETLLLRKPYGRNKPL. A helical membrane pass occupies residues 947–969; that stretch reads ISRTMMKNILGHAVYQLTLIFTL. Over 970-987 the chain is Extracellular; sequence LFVGEKMFQIDSGRNAPL. Residues 988–1009 traverse the membrane as a helical segment; that stretch reads HSPPSEHYTIIFNTFVMMQLFN. The Cytoplasmic portion of the chain corresponds to 1010–1028; it reads EINARKIHGERNVFDGIFR. The helical transmembrane segment at 1029–1050 threads the bilayer; it reads NPIFCTIVLGTFAIQIVIVQFG. The Extracellular segment spans residues 1051–1060; sequence GKPFSCSPLQ. Residues 1061–1082 form a helical membrane-spanning segment; that stretch reads LDQWMWCIFIGLGELVWGQVIA. Over 1083–1243 the chain is Cytoplasmic; it reads TIPTSRLKFL…SPIHSLETSL (161 aa). A phosphoserine mark is found at E1107, I1116, D1117, R1121, W1130, F1131, and Q1138. Residues 1123–1140 are calmodulin-binding subdomain A; it reads LRRGQILWFRGLNRIQTQ. Residue T1139 is modified to Phosphothreonine; by PKC. The interval 1141–1150 is calmodulin-binding subdomain B; that stretch reads IRVVKAFRSS. 8 positions are modified to phosphoserine: V1144, F1147, R1148, Y1152, R1161, T1162, I1175, and S1178. A Phosphothreonine modification is found at T1188. Residues 1194–1243 are disordered; it reads AALKQNSSPPSSLNKNNSAIDSGINLTTDTSKSATSSSPGSPIHSLETSL. Low complexity-rich tracts occupy residues 1196 to 1211 and 1220 to 1234; these read LKQN…KNNS and TTDT…SPGS. The residue at position 1201 (S1201) is a Phosphoserine; by PKA. S1211 is modified (phosphoserine).

This sequence belongs to the cation transport ATPase (P-type) (TC 3.A.3) family. Type IIB subfamily. In terms of assembly, interacts with PDZD11. As to expression, isoforms containing segment B are found in brain, uterus, liver and kidney and in low levels in other tissues. Isoforms containing segment W are found in kidney, uterus, and pancreas. Isoforms containing segment Y are found in pancreas and in low levels in brain and heart. Isoforms containing segment Z are found in brain and heart and isoforms containing segment X are found in low levels in brain. Isoforms containing segment A are found in low levels in heart and small intestine while isoforms containing segment C are found in testis and in low levels in other tissues.

It localises to the cell membrane. Its subcellular location is the synapse. It is found in the apical cell membrane. The protein resides in the basolateral cell membrane. It carries out the reaction Ca(2+)(in) + ATP + H2O = Ca(2+)(out) + ADP + phosphate + H(+). Its function is as follows. ATP-driven Ca(2+) ion pump involved in the maintenance of basal intracellular Ca(2+) levels in specialized cells of cerebellar circuit and vestibular and cochlear systems. Uses ATP as an energy source to transport cytosolic Ca(2+) ions across the plasma membrane to the extracellular compartment. Has fast activation and Ca(2+) clearance rate suited to control fast neuronal Ca(2+) dynamics. At parallel fiber to Purkinje neuron synapse, mediates presynaptic Ca(2+) efflux in response to climbing fiber-induced Ca(2+) rise. Provides for fast return of Ca(2+) concentrations back to their resting levels, ultimately contributing to long-term depression induction and motor learning. Plays an essential role in hearing and balance. In cochlear hair cells, shuttles Ca(2+) ions from stereocilia to the endolymph and dissipates Ca(2+) transients generated by the opening of the mechanoelectrical transduction channels. Regulates Ca(2+) levels in the vestibular system, where it contributes to the formation of otoconia. In non-excitable cells, regulates Ca(2+) signaling through spatial control of Ca(2+) ions extrusion and dissipation of Ca(2+) transients generated by store-operated channels. In lactating mammary gland, allows for the high content of Ca(2+) ions in the milk. In Rattus norvegicus (Rat), this protein is Plasma membrane calcium-transporting ATPase 2 (Atp2b2).